The sequence spans 349 residues: Ribosomal RNA small subunit methyltransferase H 2 (349 aa).

Residues 80–82 (GGH), Asp100, Phe130, Asp149, and Gln156 each bind S-adenosyl-L-methionine.

It belongs to the methyltransferase superfamily. RsmH family.

The protein resides in the cytoplasm. The catalysed reaction is cytidine(1402) in 16S rRNA + S-adenosyl-L-methionine = N(4)-methylcytidine(1402) in 16S rRNA + S-adenosyl-L-homocysteine + H(+). Its function is as follows. Specifically methylates the N4 position of cytidine in position 1402 (C1402) of 16S rRNA. The protein is Ribosomal RNA small subunit methyltransferase H 2 of Alkaliphilus metalliredigens (strain QYMF).